Here is a 185-residue protein sequence, read N- to C-terminus: Lectin B4 (185 aa).

N-linked (GlcNAc...) asparagine glycosylation occurs at Asn48. The Mn(2+) site is built by Glu111 and Asp113. The Ca(2+) site is built by Asp113, Tyr115, Asn117, and Asp120. Asp120 is a binding site for Mn(2+). N-linked (GlcNAc...) asparagine glycosylation occurs at Asn122. Residue His125 participates in Mn(2+) binding.

It belongs to the leguminous lectin family. In terms of assembly, homo- or heterotetramer. V.villosa isolectins are composed of either two subunits a and two subunits B (A2B2), four subunits A (A4), or four subunits B (B4). The predominant form, isolectin B4, has no A1 erythrocyte agglutinating activity.

N-acetyl-D-galactosamine specific lectin. Binds the Tn determinant (GalNAc-alpha-O-Ser/Thr) of the tumor-associated glycopeptide. Could be required for agglutinating cells such as Tn-exposed erythrocytes. In Vicia villosa (Hairy vetch), this protein is Lectin B4.